The following is a 48-amino-acid chain: Delta-ctenitoxin-Pn1b (48 aa).

Intrachain disulfides connect C1/C15, C8/C21, C12/C48, C14/C31, and C23/C29.

Belongs to the neurotoxin 03 (Tx2) family. 05 subfamily. In terms of tissue distribution, expressed by the venom gland.

It is found in the secreted. Insecticidal neurotoxin that reversibly inhibits the N-methyl-D-aspartate (NMDA)-subtype of ionotropic glutamate receptor (GRIN) and inhibits inactivation of insect sodium channels (Nav). Inhibits glutamate uptake in rat brain synaptosomes. In vivo, induces immediate excitatory effects when injected intrathoracically in houseflies and cockroaches. In Phoneutria nigriventer (Brazilian armed spider), this protein is Delta-ctenitoxin-Pn1b.